Consider the following 198-residue polypeptide: Phycocyanobilin lyase CpcT homolog (198 aa).

It belongs to the CpcT/CpeT biliprotein lyase family.

Functionally, covalently attaches a chromophore to Cys residue(s) of phycobiliproteins. In vitro is not seen to act as a chromophore lyase for ApcA1, ApcA2, ApcB, ApcD, ApcF, CpcB or PecB, the lyase activity is therefore unsure. This Nostoc sp. (strain PCC 7120 / SAG 25.82 / UTEX 2576) protein is Phycocyanobilin lyase CpcT homolog (cpcT2).